We begin with the raw amino-acid sequence, 398 residues long: Cytochrome P450 165B3 (398 aa).

C347 is a heme binding site.

This sequence belongs to the cytochrome P450 family. The cofactor is heme.

The protein operates within antibiotic biosynthesis; vancomycin biosynthesis. Its function is as follows. Involved in the coupling of aromatic side chains of the heptapeptide of vancomycin. In Amycolatopsis orientalis (Nocardia orientalis), this protein is Cytochrome P450 165B3 (cyp165B3).